A 330-amino-acid chain; its full sequence is Small ribosomal subunit protein uS15m (330 aa).

This sequence belongs to the universal ribosomal protein uS15 family. Component of the mitochondrial ribosome small subunit (28S) which comprises a 12S rRNA and about 30 distinct proteins.

It is found in the mitochondrion. This is Small ribosomal subunit protein uS15m (mrps-15) from Caenorhabditis elegans.